A 272-amino-acid polypeptide reads, in one-letter code: Leucoagglutinating phytohemagglutinin (272 aa).

Residues M1–S20 form the signal peptide. N-linked (GlcNAc...) (high mannose) asparagine glycosylation is present at N32. An N-linked (GlcNAc...) (complex) asparagine glycan is attached at N80.

Belongs to the leguminous lectin family. As to quaternary structure, homotetramer. In terms of processing, N-glycosylated on Asn-80; contains xylose.

Its function is as follows. This insecticidal carbohydrate-binding lectin is toxic for the cowpea weevil. This is Leucoagglutinating phytohemagglutinin (DLEC2) from Phaseolus vulgaris (Kidney bean).